The sequence spans 136 residues: Nanos homolog 2 (136 aa).

The tract at residues 27–51 (KQRQEGEVAEEPNSRPQEKSEQDLE) is disordered. Over residues 28–48 (QRQEGEVAEEPNSRPQEKSEQ) the composition is skewed to basic and acidic residues. Residues 60-114 (ICNFCKHNGESRHVYTSHQLKTPEGVVVCPILRHYVCPLCGATGDQAHTLKYCPL) form a Nanos-type zinc finger. Residues cysteine 61, cysteine 64, histidine 77, cysteine 88, cysteine 96, cysteine 99, histidine 107, and cysteine 112 each contribute to the Zn(2+) site. 2 consecutive short sequence motifs (C2HC) follow at residues 61-88 (CNFC…VVVC) and 96-112 (CPLC…LKYC).

The protein belongs to the nanos family. In terms of assembly, interacts with CNOT1, CNOT3, CNOT6L, CNOT7 and CNOT9. In terms of tissue distribution, predominantly expressed in male germ cells. Expressed in self-renewing spermatogonial stem cells and developing gonads.

Its subcellular location is the cytoplasm. The protein localises to the P-body. It localises to the perinuclear region. In terms of biological role, plays a key role in the sexual differentiation of germ cells by promoting the male fate but suppressing the female fate. Represses the female fate pathways by suppressing meiosis, which in turn results in the promotion of the male fate. Maintains the suppression of meiosis by preventing STRA8 expression, which is required for premeiotic DNA replication, after CYP26B1 is decreased. Regulates the localization of the CCR4-NOT deadenylation complex to P-bodies and plays a role in recruiting the complex to trigger the degradation of mRNAs involved in meiosis. Required for the maintenance of the spermatogonial stem cell population. Not essential for the assembly of P-bodies but is required for the maintenance of their normal state. The protein is Nanos homolog 2 (Nanos2) of Mus musculus (Mouse).